Reading from the N-terminus, the 104-residue chain is Large ribosomal subunit protein bL21c (104 aa).

Belongs to the bacterial ribosomal protein bL21 family. In terms of assembly, part of the 50S ribosomal subunit.

Its subcellular location is the plastid. It localises to the chloroplast. This protein binds to 23S rRNA. The chain is Large ribosomal subunit protein bL21c from Pyropia yezoensis (Susabi-nori).